Reading from the N-terminus, the 328-residue chain is Biotin synthase (328 aa).

Residues 48–278 form the Radical SAM core domain; it reads FTGNSASLCS…GKSLSVCGGR (231 aa). [4Fe-4S] cluster contacts are provided by cysteine 66, cysteine 70, and cysteine 73. The [2Fe-2S] cluster site is built by serine 143 and cysteine 203.

Belongs to the radical SAM superfamily. Biotin synthase family. As to quaternary structure, homodimer. Requires [4Fe-4S] cluster as cofactor. [2Fe-2S] cluster is required as a cofactor.

It catalyses the reaction (4R,5S)-dethiobiotin + (sulfur carrier)-SH + 2 reduced [2Fe-2S]-[ferredoxin] + 2 S-adenosyl-L-methionine = (sulfur carrier)-H + biotin + 2 5'-deoxyadenosine + 2 L-methionine + 2 oxidized [2Fe-2S]-[ferredoxin]. The protein operates within cofactor biosynthesis; biotin biosynthesis; biotin from 7,8-diaminononanoate: step 2/2. In terms of biological role, catalyzes the conversion of dethiobiotin (DTB) to biotin by the insertion of a sulfur atom into dethiobiotin via a radical-based mechanism. This is Biotin synthase from Pelobacter propionicus (strain DSM 2379 / NBRC 103807 / OttBd1).